A 170-amino-acid polypeptide reads, in one-letter code: MKTLFLGVTLGLAAALSFTLEEEDITGTWYVKAMVVDKDFPEDRRPRKVSPVKVTALGGGNLEATFTFMREDRCIQKKILMRKTEEPGKFSAYGGRKLIYLQELPGTDDYVFYCKDQRRGGLRYMGKLVGRNPNTNLEALEEFKKLVQHKGLSEEDIFMPLQTGSCVLEH.

The N-terminal stretch at 1–15 is a signal peptide; that stretch reads MKTLFLGVTLGLAAA. Cysteines 74 and 166 form a disulfide.

Belongs to the calycin superfamily. Lipocalin family. In terms of assembly, monomer. As to expression, strongly expressed in the nasal structures, salivary and lachrymal glands, and lung. Expressed in the liver.

Its subcellular location is the secreted. Functionally, binds and transports small hydrophobic volatile molecules with a higher affinity for aldehydes and large fatty acids, including undecanal, palmitic acid, efficient aldehydes, benzenic aldehydes, heterocyclic aldehydes and aliphatic acids. This Homo sapiens (Human) protein is Odorant-binding protein 2a (OBP2A).